We begin with the raw amino-acid sequence, 171 residues long: S-ribosylhomocysteine lyase (171 aa).

Fe cation is bound by residues histidine 54, histidine 58, and cysteine 128.

This sequence belongs to the LuxS family. As to quaternary structure, homodimer. Fe cation serves as cofactor.

It carries out the reaction S-(5-deoxy-D-ribos-5-yl)-L-homocysteine = (S)-4,5-dihydroxypentane-2,3-dione + L-homocysteine. In terms of biological role, involved in the synthesis of autoinducer 2 (AI-2) which is secreted by bacteria and is used to communicate both the cell density and the metabolic potential of the environment. The regulation of gene expression in response to changes in cell density is called quorum sensing. Catalyzes the transformation of S-ribosylhomocysteine (RHC) to homocysteine (HC) and 4,5-dihydroxy-2,3-pentadione (DPD). The protein is S-ribosylhomocysteine lyase of Campylobacter concisus (strain 13826).